We begin with the raw amino-acid sequence, 362 residues long: Probable dual-specificity RNA methyltransferase RlmN (362 aa).

Glutamate 105 functions as the Proton acceptor in the catalytic mechanism. Residues 111–344 enclose the Radical SAM core domain; the sequence is HEYGNSICVT…VTIRREQGHD (234 aa). Residues cysteine 118 and cysteine 349 are joined by a disulfide bond. The [4Fe-4S] cluster site is built by cysteine 125, cysteine 129, and cysteine 132. Residues 175 to 176, serine 207, 230 to 232, and asparagine 306 contribute to the S-adenosyl-L-methionine site; these read GE and SLH. Cysteine 349 (S-methylcysteine intermediate) is an active-site residue.

It belongs to the radical SAM superfamily. RlmN family. [4Fe-4S] cluster serves as cofactor.

It localises to the cytoplasm. The enzyme catalyses adenosine(2503) in 23S rRNA + 2 reduced [2Fe-2S]-[ferredoxin] + 2 S-adenosyl-L-methionine = 2-methyladenosine(2503) in 23S rRNA + 5'-deoxyadenosine + L-methionine + 2 oxidized [2Fe-2S]-[ferredoxin] + S-adenosyl-L-homocysteine. The catalysed reaction is adenosine(37) in tRNA + 2 reduced [2Fe-2S]-[ferredoxin] + 2 S-adenosyl-L-methionine = 2-methyladenosine(37) in tRNA + 5'-deoxyadenosine + L-methionine + 2 oxidized [2Fe-2S]-[ferredoxin] + S-adenosyl-L-homocysteine. Specifically methylates position 2 of adenine 2503 in 23S rRNA and position 2 of adenine 37 in tRNAs. This chain is Probable dual-specificity RNA methyltransferase RlmN, found in Bacillus cereus (strain G9842).